Reading from the N-terminus, the 222-residue chain is Eukaryotic translation initiation factor 4E-1 (222 aa).

Residues 1-22 (MVDEVEKPASLEESKTNTREVE) show a composition bias toward basic and acidic residues. Residues 1 to 37 (MVDEVEKPASLEESKTNTREVEEGAEEVIESDDTMSS) are disordered. Positions 23-33 (EGAEEVIESDD) are enriched in acidic residues. EIF4G-binding stretches follow at residues 47–50 (HPLE) and 57–93 (FDNPSGKSKQAAWGSSIRPIYTFSTVEDFWSVYNNIH). Residues 65-70 (KQAAWG), Lys97, and 115-116 (WE) contribute to the mRNA site. An intrachain disulfide couples Cys120 to Cys158. Residues 141–150 (YTLLAMIGEQ) form an EIF4G-binding region. Residues 165–170 (RVRQEK) and 210–214 (KKLDR) contribute to the mRNA site.

The protein belongs to the eukaryotic initiation factor 4E family. In terms of assembly, EIF4F is a multi-subunit complex, the composition of which varies with external and internal environmental conditions. It is composed of at least EIF4A, EIF4E and EIF4G. EIF4E is also known to interact with other partners. In higher plants two isoforms of EIF4F have been identified, named isoform EIF4F and isoform EIF(iso)4F. Isoform EIF4F has subunits p220 and p26, whereas isoform EIF(iso)4F has subunits p82 and p28. According to the redox status, the Cys-120-Cys-158 disulfide bridge may have a role in regulating protein function by affecting its ability to bind capped mRNA. In terms of tissue distribution, expressed ubiquitously in seedlings, roots, leaves, sepals, petals, anthers and dehisced pollen, with highest levels in pollen, maturing anthers and roots. Strongly expressed in susceptible plants but not in resistant ones.

It is found in the nucleus. Its subcellular location is the cytoplasm. Component of the protein complex eIF4F, which is involved in the recognition of the mRNA cap, ATP-dependent unwinding of 5'-terminal secondary structure and recruitment of mRNA to the ribosome. Recognizes and binds the 7-methylguanosine-containing mRNA cap during an early step in the initiation of protein synthesis and facilitates ribosome binding by inducing the unwinding of the mRNAs secondary structures. Key component of recessive resistance to potyviruses. Functionally, (Microbial infection) Susceptibility host factor required for viral infection (e.g. potato virus Y (PVY) and pepper mottle virus (PepMoV)) by recruiting viral RNAs to the host ribosomal complex via an interaction with viral genome-linked protein (VPg). The polypeptide is Eukaryotic translation initiation factor 4E-1 (Nicotiana tabacum (Common tobacco)).